Reading from the N-terminus, the 341-residue chain is Dihydroorotate dehydrogenase (quinone) (341 aa).

FMN is bound by residues 61 to 65 and Thr85; that span reads AGLDK. Lys65 provides a ligand contact to substrate. 110 to 114 is a binding site for substrate; sequence NRMGF. Positions 138 and 171 each coordinate FMN. Asn171 provides a ligand contact to substrate. The Nucleophile role is filled by Ser174. Asn176 serves as a coordination point for substrate. Residues Lys216 and Thr244 each coordinate FMN. 245-246 lines the substrate pocket; the sequence is NT. FMN contacts are provided by residues Gly267, Gly296, and 317 to 318; that span reads YS.

This sequence belongs to the dihydroorotate dehydrogenase family. Type 2 subfamily. Monomer. Requires FMN as cofactor.

Its subcellular location is the cell membrane. It carries out the reaction (S)-dihydroorotate + a quinone = orotate + a quinol. It functions in the pathway pyrimidine metabolism; UMP biosynthesis via de novo pathway; orotate from (S)-dihydroorotate (quinone route): step 1/1. Catalyzes the conversion of dihydroorotate to orotate with quinone as electron acceptor. This Pseudomonas putida (strain GB-1) protein is Dihydroorotate dehydrogenase (quinone).